A 210-amino-acid polypeptide reads, in one-letter code: 7-methyl-GTP pyrophosphatase (210 aa).

D79 serves as the catalytic Proton acceptor.

It belongs to the Maf family. YceF subfamily. A divalent metal cation is required as a cofactor.

It is found in the cytoplasm. It catalyses the reaction N(7)-methyl-GTP + H2O = N(7)-methyl-GMP + diphosphate + H(+). Its function is as follows. Nucleoside triphosphate pyrophosphatase that hydrolyzes 7-methyl-GTP (m(7)GTP). May have a dual role in cell division arrest and in preventing the incorporation of modified nucleotides into cellular nucleic acids. In Burkholderia lata (strain ATCC 17760 / DSM 23089 / LMG 22485 / NCIMB 9086 / R18194 / 383), this protein is 7-methyl-GTP pyrophosphatase.